The chain runs to 365 residues: UDP-N-acetylglucosamine--N-acetylmuramyl-(pentapeptide) pyrophosphoryl-undecaprenol N-acetylglucosamine transferase (365 aa).

UDP-N-acetyl-alpha-D-glucosamine is bound by residues 10–12 (TAG), asparagine 124, arginine 161, serine 195, isoleucine 248, and glutamine 292.

It belongs to the glycosyltransferase 28 family. MurG subfamily.

The protein resides in the cell membrane. The catalysed reaction is di-trans,octa-cis-undecaprenyl diphospho-N-acetyl-alpha-D-muramoyl-L-alanyl-D-glutamyl-meso-2,6-diaminopimeloyl-D-alanyl-D-alanine + UDP-N-acetyl-alpha-D-glucosamine = di-trans,octa-cis-undecaprenyl diphospho-[N-acetyl-alpha-D-glucosaminyl-(1-&gt;4)]-N-acetyl-alpha-D-muramoyl-L-alanyl-D-glutamyl-meso-2,6-diaminopimeloyl-D-alanyl-D-alanine + UDP + H(+). The protein operates within cell wall biogenesis; peptidoglycan biosynthesis. Its function is as follows. Cell wall formation. Catalyzes the transfer of a GlcNAc subunit on undecaprenyl-pyrophosphoryl-MurNAc-pentapeptide (lipid intermediate I) to form undecaprenyl-pyrophosphoryl-MurNAc-(pentapeptide)GlcNAc (lipid intermediate II). In Nocardioides sp. (strain ATCC BAA-499 / JS614), this protein is UDP-N-acetylglucosamine--N-acetylmuramyl-(pentapeptide) pyrophosphoryl-undecaprenol N-acetylglucosamine transferase.